Here is a 384-residue protein sequence, read N- to C-terminus: Alpha-2B adrenergic receptor (384 aa).

A helical membrane pass occupies residues 1–25 (AIAAVITFLILFTIFGNALVILAVL). Residues 26 to 36 (TSRSLRAPQNL) lie on the Cytoplasmic side of the membrane. A helical membrane pass occupies residues 37 to 62 (FLVSLAAADILVATLIIPFSLANELL). Residues 63 to 72 (GYWYFRRTWC) lie on the Extracellular side of the membrane. C72 and C151 are disulfide-bonded. Residues 73-95 (EVYLALDVLFCTSSIVHLCAISL) traverse the membrane as a helical segment. Over 96–117 (DRYWAVSRALQYNSKRTPRRIK) the chain is Cytoplasmic. A helical transmembrane segment spans residues 118–140 (CVILTVWLIAAAISLPPLIYKGD). The Extracellular segment spans residues 141 to 156 (QGPQPRGRPQCKLNQE). The helical transmembrane segment at 157–180 (AWYILSSSIGSFFAPCLIMILVYL) threads the bilayer. Over 181–348 (RIYLIAKRSN…LTREKRFTFV (168 aa)) the chain is Cytoplasmic. A disordered region spans residues 192 to 289 (RGPRAKGAPR…PEEEEECGSP (98 aa)). Residues 218–229 (LANSPTLASSLA) show a composition bias toward polar residues. The span at 240 to 249 (PPGEKERETP) shows a compositional bias: basic and acidic residues. Residues 349 to 372 (LAVVIGVFVLCWFPFFFSYSLGAI) traverse the membrane as a helical segment. Over 373–381 (CPQHCKVPH) the chain is Extracellular. The helical transmembrane segment at 382–384 (GLF) threads the bilayer.

Belongs to the G-protein coupled receptor 1 family. Adrenergic receptor subfamily. ADRA2B sub-subfamily. Interacts with RAB26. Interacts with PPP1R9B. Interacts with GGA1, GGA2 and GGA3.

The protein resides in the cell membrane. In terms of biological role, alpha-2 adrenergic receptors mediate the catecholamine-induced inhibition of adenylate cyclase through the action of G proteins. The sequence is that of Alpha-2B adrenergic receptor (ADRA2B) from Elephas maximus (Indian elephant).